Reading from the N-terminus, the 115-residue chain is MNIIDRLEMEQMKKDIPAFKAGDTLRVHVKIVEGDKRRIQVFQGVCIKRHNKGLGSTFTVRKISDGMGVERVFPLHSPNIDKIEVMMVGRVRRAKLYYLRKLQGKAARIREKRSL.

Belongs to the bacterial ribosomal protein bL19 family.

Its function is as follows. This protein is located at the 30S-50S ribosomal subunit interface and may play a role in the structure and function of the aminoacyl-tRNA binding site. The polypeptide is Large ribosomal subunit protein bL19 (Syntrophotalea carbinolica (strain DSM 2380 / NBRC 103641 / GraBd1) (Pelobacter carbinolicus)).